A 393-amino-acid chain; its full sequence is Nucleosome assembly protein 1-like 1 (393 aa).

The span at 1–10 (MANIDNKEQT) shows a compositional bias: basic and acidic residues. Disordered stretches follow at residues 1–36 (MANI…NSKA) and 132–165 (ECEW…KEDP). Composition is skewed to acidic residues over residues 11 to 30 (ELDQ…EAGE) and 132 to 144 (ECEW…EDIS). An NAP1L motif motif is present at residues 126-151 (YEPTEEECEWKVDEEEDISGDLKDKA). A compositionally biased stretch (basic and acidic residues) spans 145–165 (GDLKDKAKLEEEKKDEEKEDP). The Nuclear localization signal signature appears at 274–280 (IKKKQKH). Acidic residues predominate over residues 347-378 (AIEDDDDDYDEEGEEADDEEGEEEADEDNDPD). The segment at 347 to 393 (AIEDDDDDYDEEGEEADDEEGEEEADEDNDPDYEPKKDQNPAECKQQ) is disordered. Positions 379-393 (YEPKKDQNPAECKQQ) are enriched in basic and acidic residues.

Belongs to the nucleosome assembly protein (NAP) family. As to quaternary structure, forms homomultimers. Interacts with histone B4. Interacts with the B-type cyclins ccnb1 and ccnb2. In terms of processing, phosphorylated by cyclin B-cdc2 kinase complexes.

The protein resides in the cytoplasm. It is found in the nucleus. Acts as a chaperone for the linker histone to facilitate deposition of histone B4 onto linker DNA. Required for both remodeling of sperm chromatin into nucleosomes, and linker histone binding to nucleosome core dimers. Plays a role in tissue-specific gene regulation. Required for primitive hemopoiesis, acting upstream of tal1/scl. The protein is Nucleosome assembly protein 1-like 1 of Xenopus tropicalis (Western clawed frog).